We begin with the raw amino-acid sequence, 439 residues long: GTPase Der (439 aa).

EngA-type G domains lie at 4–168 and 177–352; these read PIVA…KDDE and INIA…DNYT. Residues 10 to 17, 57 to 61, 120 to 123, 183 to 190, 230 to 234, and 295 to 298 each bind GTP; these read GRPNVGKS, DTGGI, NKID, GKPNVGKS, DTAGL, and NKWD. The region spanning 353-437 is the KH-like domain; that stretch reads KRVKTGVLND…GIKLEFRERK (85 aa).

Belongs to the TRAFAC class TrmE-Era-EngA-EngB-Septin-like GTPase superfamily. EngA (Der) GTPase family. Associates with the 50S ribosomal subunit.

Its function is as follows. GTPase that plays an essential role in the late steps of ribosome biogenesis. This is GTPase Der from Clostridium botulinum (strain Langeland / NCTC 10281 / Type F).